Consider the following 397-residue polypeptide: Elongation factor Tu (397 aa).

Positions 10 to 206 constitute a tr-type G domain; that stretch reads KPHVNIGTIG…AVDTSIPQPE (197 aa). Positions 19 to 26 are G1; the sequence is GHIDHGKT. 19–26 contributes to the GTP binding site; sequence GHIDHGKT. Residue Thr26 participates in Mg(2+) binding. Residues 62–66 are G2; sequence GITIS. The interval 83 to 86 is G3; that stretch reads DCPG. GTP-binding positions include 83 to 87 and 138 to 141; these read DCPGH and NKSD. The interval 138–141 is G4; the sequence is NKSD. The segment at 176–178 is G5; the sequence is SAL.

It belongs to the TRAFAC class translation factor GTPase superfamily. Classic translation factor GTPase family. EF-Tu/EF-1A subfamily. In terms of assembly, monomer.

It is found in the cytoplasm. The enzyme catalyses GTP + H2O = GDP + phosphate + H(+). Functionally, GTP hydrolase that promotes the GTP-dependent binding of aminoacyl-tRNA to the A-site of ribosomes during protein biosynthesis. This is Elongation factor Tu from Salinispora arenicola (strain CNS-205).